We begin with the raw amino-acid sequence, 265 residues long: H-2 class II histocompatibility antigen, A beta chain (265 aa).

Residues 1–27 form the signal peptide; that stretch reads MALQIPSLLLSAAVVVLMVLSSPGTEG. Residues 28-122 are beta-1; the sequence is GDSERHFVYQ…PETHTSLRRL (95 aa). At 28–226 the chain is on the extracellular side; that stretch reads GDSERHFVYQ…RAQSESAWSK (199 aa). 2 disulfides stabilise this stretch: Cys42-Cys106 and Cys145-Cys201. A glycan (N-linked (GlcNAc...) asparagine) is linked at Asn46. A beta-2 region spans residues 123–216; it reads EQPNVVISLS…SLKSPITVEW (94 aa). The 89-residue stretch at 125 to 213 folds into the Ig-like C1-type domain; it reads PNVVISLSRT…EHPSLKSPIT (89 aa). Residues 217–226 form a connecting peptide region; it reads RAQSESAWSK. Residues 227 to 247 form a helical membrane-spanning segment; it reads MLSGIGGCVLGVIFLGLGLFI. The Cytoplasmic segment spans residues 248–265; sequence RHRSQKGPRGPPPAGLLQ.

It belongs to the MHC class II family. Ubiquitinated in immature dendritic cells leading to down-regulation of MHC class II.

It localises to the membrane. This is H-2 class II histocompatibility antigen, A beta chain (H2-Ab1) from Mus musculus (Mouse).